Consider the following 363-residue polypeptide: Carbamoyl phosphate synthase small chain (363 aa).

CPSase stretches follow at residues Met1–Gly168 and Met1–Arg172. Residues Ser46, Gly220, and Gly222 each contribute to the L-glutamine site. In terms of domain architecture, Glutamine amidotransferase type-1 spans Arg172–Gly359. Cys247 acts as the Nucleophile in catalysis. L-glutamine contacts are provided by Leu248, Gln251, Asn289, Gly291, and Tyr292. Active-site residues include His332 and Glu334.

Belongs to the CarA family. In terms of assembly, composed of two chains; the small (or glutamine) chain promotes the hydrolysis of glutamine to ammonia, which is used by the large (or ammonia) chain to synthesize carbamoyl phosphate. Tetramer of heterodimers (alpha,beta)4.

The enzyme catalyses hydrogencarbonate + L-glutamine + 2 ATP + H2O = carbamoyl phosphate + L-glutamate + 2 ADP + phosphate + 2 H(+). The catalysed reaction is L-glutamine + H2O = L-glutamate + NH4(+). The protein operates within amino-acid biosynthesis; L-arginine biosynthesis; carbamoyl phosphate from bicarbonate: step 1/1. It participates in pyrimidine metabolism; UMP biosynthesis via de novo pathway; (S)-dihydroorotate from bicarbonate: step 1/3. Its function is as follows. Small subunit of the glutamine-dependent carbamoyl phosphate synthetase (CPSase). CPSase catalyzes the formation of carbamoyl phosphate from the ammonia moiety of glutamine, carbonate, and phosphate donated by ATP, constituting the first step of 2 biosynthetic pathways, one leading to arginine and/or urea and the other to pyrimidine nucleotides. The small subunit (glutamine amidotransferase) binds and cleaves glutamine to supply the large subunit with the substrate ammonia. The sequence is that of Carbamoyl phosphate synthase small chain from Listeria innocua serovar 6a (strain ATCC BAA-680 / CLIP 11262).